Here is a 349-residue protein sequence, read N- to C-terminus: MNTAAIDQTDARPLDTTTAPMVDPFGRAVTYLRVSVTDRCDFRCTYCMAEHMAFLPKKDLLTLEELQRLCSAFIAKGVRKLRLTGGEPLVRKNIMFLIRELGKEIEAGRLDELTLTTNGSQLSKFAAELVDCGVRRINVSLDTLDPDKFRQITRWGELARVLEGIDAALAAGLKVKINAVALKDFNDAEIPELMRWAHGRGMDLTLIETMPMGEVDEDRTDHYLPLSEMRRRLEADFTLSDIPYRTGGPARYVEVAETGGRLGLITPLTHNFCESCNRVRLTCTGTLYMCLGQNDAADLRAALRATDDDAYLAQVIDEAIGRKPKGHDFIIDREHNRPAVARHMSVTGG.

Positions 24–250 (PFGRAVTYLR…DIPYRTGGPA (227 aa)) constitute a Radical SAM core domain. Arginine 33 contributes to the GTP binding site. Cysteine 40 and cysteine 44 together coordinate [4Fe-4S] cluster. Tyrosine 46 contributes to the S-adenosyl-L-methionine binding site. Cysteine 47 is a [4Fe-4S] cluster binding site. Position 82 (arginine 82) interacts with GTP. Residue glycine 86 participates in S-adenosyl-L-methionine binding. Threonine 116 is a binding site for GTP. Serine 140 contributes to the S-adenosyl-L-methionine binding site. Lysine 176 contributes to the GTP binding site. Methionine 210 serves as a coordination point for S-adenosyl-L-methionine. [4Fe-4S] cluster is bound by residues cysteine 273 and cysteine 276. GTP is bound at residue 278-280 (RVR). Cysteine 290 provides a ligand contact to [4Fe-4S] cluster.

It belongs to the radical SAM superfamily. MoaA family. In terms of assembly, monomer and homodimer. [4Fe-4S] cluster is required as a cofactor.

It carries out the reaction GTP + AH2 + S-adenosyl-L-methionine = (8S)-3',8-cyclo-7,8-dihydroguanosine 5'-triphosphate + 5'-deoxyadenosine + L-methionine + A + H(+). The protein operates within cofactor biosynthesis; molybdopterin biosynthesis. In terms of biological role, catalyzes the cyclization of GTP to (8S)-3',8-cyclo-7,8-dihydroguanosine 5'-triphosphate. The polypeptide is GTP 3',8-cyclase (Rhizobium meliloti (strain 1021) (Ensifer meliloti)).